The primary structure comprises 82 residues: ATP synthase subunit c (82 aa).

2 helical membrane-spanning segments follow: residues 6-26 (LGLTCLAAAIGMAIAAAGCGI) and 49-69 (IMVTLILGLAFVESLAIYALV).

Belongs to the ATPase C chain family. In terms of assembly, F-type ATPases have 2 components, F(1) - the catalytic core - and F(0) - the membrane proton channel. F(1) has five subunits: alpha(3), beta(3), gamma(1), delta(1), epsilon(1). F(0) has three main subunits: a(1), b(2) and c(10-14). The alpha and beta chains form an alternating ring which encloses part of the gamma chain. F(1) is attached to F(0) by a central stalk formed by the gamma and epsilon chains, while a peripheral stalk is formed by the delta and b chains.

The protein resides in the cell inner membrane. In terms of biological role, f(1)F(0) ATP synthase produces ATP from ADP in the presence of a proton or sodium gradient. F-type ATPases consist of two structural domains, F(1) containing the extramembraneous catalytic core and F(0) containing the membrane proton channel, linked together by a central stalk and a peripheral stalk. During catalysis, ATP synthesis in the catalytic domain of F(1) is coupled via a rotary mechanism of the central stalk subunits to proton translocation. Its function is as follows. Key component of the F(0) channel; it plays a direct role in translocation across the membrane. A homomeric c-ring of between 10-14 subunits forms the central stalk rotor element with the F(1) delta and epsilon subunits. This is ATP synthase subunit c from Nitratidesulfovibrio vulgaris (strain ATCC 29579 / DSM 644 / CCUG 34227 / NCIMB 8303 / VKM B-1760 / Hildenborough) (Desulfovibrio vulgaris).